We begin with the raw amino-acid sequence, 157 residues long: S-ribosylhomocysteine lyase (157 aa).

3 residues coordinate Fe cation: His54, His58, and Cys126.

This sequence belongs to the LuxS family. Homodimer. Fe cation serves as cofactor.

The enzyme catalyses S-(5-deoxy-D-ribos-5-yl)-L-homocysteine = (S)-4,5-dihydroxypentane-2,3-dione + L-homocysteine. Its function is as follows. Involved in the synthesis of autoinducer 2 (AI-2) which is secreted by bacteria and is used to communicate both the cell density and the metabolic potential of the environment. The regulation of gene expression in response to changes in cell density is called quorum sensing. Catalyzes the transformation of S-ribosylhomocysteine (RHC) to homocysteine (HC) and 4,5-dihydroxy-2,3-pentadione (DPD). The polypeptide is S-ribosylhomocysteine lyase (Bacillus cereus (strain G9842)).